The sequence spans 329 residues: Deoxynucleotidyltransferase terminal-interacting protein 1 (329 aa).

Disordered stretches follow at residues 1 to 22 (MGAT…GGLE) and 147 to 178 (KRGR…ILSS). The tract at residues 56 to 147 (MTTSFTDPAI…RLTHELPGIK (92 aa)) is important for dimerization. A compositionally biased stretch (basic and acidic residues) spans 147–158 (KRGRQAEEECAH). The a.T hook DNA-binding region spans 159–173 (RGSPLPKKRKGRPPG). Residue Ser-161 is modified to Phosphoserine. Residues 164-170 (PKKRKGR) carry the Nuclear localization signal motif. Residues 197 to 316 (REGPKWDPAR…MRKYMETLRT (120 aa)) form an important for DNA and nucleosome binding region. A DNA-binding region (H-T-H motif) is located at residues 216 to 237 (GSRANKALGMGGTRGRIYIKHP).

In terms of assembly, monomer and homodimer. A minor proportion may form homotrimers. Interacts with ZNF541. Interacts with the terminal deoxynucleotidyltransferase DNTT. Interacts with TRERF1. Identified in a histone deacetylase complex that contains DNTTIP1, HDAC1 and MIDEAS; this complex assembles into a tetramer that contains four copies of each protein chain. Component of a histone deacetylase complex containing DNTTIP1, ZNF541, HDAC1 and HDAC2. Identified in a complex with KCTD19, HDAC1, HDAC2 and ZNF541.

The protein localises to the nucleus. Increases DNTT terminal deoxynucleotidyltransferase activity (in vitro). Also acts as a transcriptional regulator, binding to the consensus sequence 5'-GNTGCATG-3' following an AT-tract. Associates with RAB20 promoter and positively regulates its transcription. Binds DNA and nucleosomes; may recruit HDAC1 complexes to nucleosomes or naked DNA. This is Deoxynucleotidyltransferase terminal-interacting protein 1 (DNTTIP1) from Homo sapiens (Human).